We begin with the raw amino-acid sequence, 271 residues long: Imidazole glycerol phosphate synthase subunit HisF (271 aa).

Active-site residues include Asp-12 and Asp-136.

The protein belongs to the HisA/HisF family. Heterodimer of HisH and HisF.

It is found in the cytoplasm. It carries out the reaction 5-[(5-phospho-1-deoxy-D-ribulos-1-ylimino)methylamino]-1-(5-phospho-beta-D-ribosyl)imidazole-4-carboxamide + L-glutamine = D-erythro-1-(imidazol-4-yl)glycerol 3-phosphate + 5-amino-1-(5-phospho-beta-D-ribosyl)imidazole-4-carboxamide + L-glutamate + H(+). It functions in the pathway amino-acid biosynthesis; L-histidine biosynthesis; L-histidine from 5-phospho-alpha-D-ribose 1-diphosphate: step 5/9. Functionally, IGPS catalyzes the conversion of PRFAR and glutamine to IGP, AICAR and glutamate. The HisF subunit catalyzes the cyclization activity that produces IGP and AICAR from PRFAR using the ammonia provided by the HisH subunit. The polypeptide is Imidazole glycerol phosphate synthase subunit HisF (Haloarcula marismortui (strain ATCC 43049 / DSM 3752 / JCM 8966 / VKM B-1809) (Halobacterium marismortui)).